Here is a 277-residue protein sequence, read N- to C-terminus: Carbonyl reductase [NADPH] 1 (277 aa).

At serine 2 the chain carries N-acetylserine. Serine 2 bears the Phosphoserine mark. Residues valine 10–valine 34, aspartate 63–isoleucine 64, and asparagine 90 contribute to the NADP(+) site. Residues phenylalanine 95–valine 97 and glutamine 106 contribute to the glutathione site. Residue serine 140 participates in substrate binding. Alanine 193–tyrosine 194 is a binding site for glutathione. Tyrosine 194 acts as the Proton acceptor in catalysis. Residues tyrosine 194–lysine 198 and valine 231–threonine 233 contribute to the NADP(+) site. An N6-1-carboxyethyl lysine modification is found at lysine 239. Positions proline 258–tryptophan 277 are disordered.

It belongs to the short-chain dehydrogenases/reductases (SDR) family. In terms of assembly, monomer.

Its subcellular location is the cytoplasm. It carries out the reaction a secondary alcohol + NADP(+) = a ketone + NADPH + H(+). It catalyses the reaction prostaglandin F2alpha + NADP(+) = prostaglandin E2 + NADPH + H(+). The enzyme catalyses prostaglandin E1 + NADP(+) = 15-oxoprostaglandin E1 + NADPH + H(+). The catalysed reaction is menadione + NADPH + H(+) = menadiol + NADP(+). It carries out the reaction prostaglandin D2 + NADP(+) = 15-oxoprostaglandin D2 + NADPH + H(+). It catalyses the reaction prostaglandin E2 + NADP(+) = 15-oxoprostaglandin E2 + NADPH + H(+). The enzyme catalyses prostaglandin F2alpha + NADP(+) = 15-oxoprostaglandin F2alpha + NADPH + H(+). The catalysed reaction is daunorubicin + NADPH + H(+) = 13-dihydrodaunorubicin + NADP(+). It carries out the reaction S-nitrosoglutathione + NADPH + H(+) = S-(hydroxysulfenamide)glutathione + NADP(+). It catalyses the reaction a primary alcohol + NADP(+) = an aldehyde + NADPH + H(+). The enzyme catalyses cortisol + NADPH + H(+) = 20beta-dihydrocortisol + NADP(+). The catalysed reaction is corticosterone + NADPH + H(+) = 20beta-dihydrocorticosterone + NADP(+). In terms of biological role, NADPH-dependent reductase with broad substrate specificity. Catalyzes the reduction of a wide variety of carbonyl compounds including quinones, prostaglandins, menadione, plus various xenobiotics. Catalyzes the reduction of the antitumor anthracyclines doxorubicin and daunorubicin to the cardiotoxic compounds doxorubicinol and daunorubicinol. Can convert prostaglandin E to prostaglandin F2-alpha. Can bind glutathione, which explains its higher affinity for glutathione-conjugated substrates. Catalyzes the reduction of S-nitrosoglutathione. In addition, participates in the glucocorticoid metabolism by catalyzing the NADPH-dependent cortisol/corticosterone into 20beta-dihydrocortisol (20b-DHF) or 20beta-corticosterone (20b-DHB), which are weak agonists of NR3C1 and NR3C2 in adipose tissue. The sequence is that of Carbonyl reductase [NADPH] 1 from Rattus norvegicus (Rat).